Here is a 1129-residue protein sequence, read N- to C-terminus: Inositol hexakisphosphate and diphosphoinositol-pentakisphosphate kinase 2 (1129 aa).

At Ser-44 the chain carries Phosphoserine. A substrate-binding site is contributed by 59-60; that stretch reads KK. The ATP site is built by Arg-140, Lys-193, His-200, and Arg-219. Substrate is bound at residue 219–220; sequence RK. Ser-229 carries the post-translational modification Phosphoserine. Residues 243 to 246 and 252 to 254 each bind ATP; these read EEFM and DVK. 2 residues coordinate substrate: Lys-254 and Arg-268. Residues Ser-270, Asp-315, and 327-329 contribute to the ATP site; that span reads DVN. 332-335 lines the substrate pocket; it reads SFVK. Residues 377 to 448 are polyphosphoinositide-binding domain; the sequence is PTTSGTMMEL…VLDIARQLLM (72 aa). The segment at 904–945 is disordered; that stretch reads KGCEEDKNLPSGYGYRPASRENEGRRSLKTDDDEPHTSKRDE. Residues 921 to 945 show a composition bias toward basic and acidic residues; sequence ASRENEGRRSLKTDDDEPHTSKRDE. Phosphoserine is present on residues Ser-1051, Ser-1058, and Ser-1066. Residues 1070–1129 form a disordered region; it reads YTPTKILPTPPAALKSSKASSKAAAGGPSQAMAPHTSSRKKSINSKTEGHEPKKSTGKKR. Residues 1081 to 1098 show a composition bias toward low complexity; sequence AALKSSKASSKAAAGGPS. 2 positions are modified to phosphoserine: Ser-1106 and Ser-1107.

It belongs to the histidine acid phosphatase family. VIP1 subfamily. Ubiquitously expressed. Expressed in the cochlear and vestibular sensory hair cells, supporting cells and spiral ganglion neurons.

It is found in the cytoplasm. The protein resides in the cytosol. It catalyses the reaction 1D-myo-inositol hexakisphosphate + ATP = 1-diphospho-1D-myo-inositol 2,3,4,5,6-pentakisphosphate + ADP. The enzyme catalyses 5-diphospho-1D-myo-inositol 1,2,3,4,6-pentakisphosphate + ATP + H(+) = 1,5-bis(diphospho)-1D-myo-inositol 2,3,4,6-tetrakisphosphate + ADP. In terms of biological role, bifunctional inositol kinase that acts in concert with the IP6K kinases IP6K1, IP6K2 and IP6K3 to synthesize the diphosphate group-containing inositol pyrophosphates diphosphoinositol pentakisphosphate, PP-InsP5, and bis-diphosphoinositol tetrakisphosphate, (PP)2-InsP4. PP-InsP5 and (PP)2-InsP4, also respectively called InsP7 and InsP8, regulate a variety of cellular processes, including apoptosis, vesicle trafficking, cytoskeletal dynamics, exocytosis, insulin signaling and neutrophil activation. Phosphorylates inositol hexakisphosphate (InsP6) at position 1 to produce PP-InsP5 which is in turn phosphorylated by IP6Ks to produce (PP)2-InsP4. Alternatively, phosphorylates PP-InsP5 at position 1, produced by IP6Ks from InsP6, to produce (PP)2-InsP4. Required for normal hearing. The chain is Inositol hexakisphosphate and diphosphoinositol-pentakisphosphate kinase 2 from Mus musculus (Mouse).